The primary structure comprises 560 residues: Nucleoprotein (560 aa).

The segment at 54-236 is binding site for the cap structure m7GTP; it reads LRKSKRGDTD…ITKDESALNI (183 aa). Mn(2+) is bound by residues Asp380 and Glu382. 4 residues coordinate Zn(2+): Glu390, Cys497, His500, and Cys521. Residue Asp525 participates in Mn(2+) binding.

This sequence belongs to the arenaviridae nucleocapsid protein family. In terms of assembly, homomultimerizes to form the nucleocapsid. Binds to viral genomic RNA. Interacts with glycoprotein G2. Interacts with protein Z; this interaction probably directs the encapsidated genome to budding sites. Interacts with protein L; this interaction does not interfere with Z-L interaction. Interacts with host IKBKE (via Protein kinase domain); the interaction inhibits IKBKE kinase activity.

Its subcellular location is the virion. It localises to the host cytoplasm. Encapsidates the genome, protecting it from nucleases. The encapsidated genomic RNA is termed the nucleocapsid (NC). Serves as template for viral transcription and replication. The increased presence of protein N in host cell does not seem to trigger the switch from transcription to replication as observed in other negative strain RNA viruses. Through the interaction with host IKBKE, strongly inhibits the phosphorylation and nuclear translocation of host IRF3, a protein involved in interferon activation pathway, leading to the inhibition of interferon-beta and IRF3-dependent promoters activation. Also encodes a functional 3'-5' exoribonuclease that degrades preferentially dsRNA substrates and thereby participates in the suppression of interferon induction. The chain is Nucleoprotein from Homo sapiens (Human).